The following is a 184-amino-acid chain: Probable sensory rhodopsin transducer (184 aa).

2 helical membrane passes run 14–34 (TLGV…VNVY) and 52–72 (GLVS…TIIG). The region spanning 73–125 (RERTAAVETLAAQARQIEQGELDVDLATNRTDDVGDIYRALAVLRDSEQLDRQ) is the HAMP domain.

Belongs to the methyl-accepting chemotaxis (MCP) protein family. In terms of assembly, interacts with Xop2/SRM.

It localises to the membrane. The HtrM-Xop2/SRM complex may interact with CheB or CheR and modulate their availability to Sop1 or Sop2. The polypeptide is Probable sensory rhodopsin transducer (htrM) (Haloarcula marismortui (strain ATCC 43049 / DSM 3752 / JCM 8966 / VKM B-1809) (Halobacterium marismortui)).